Reading from the N-terminus, the 58-residue chain is Metallothionein (58 aa).

The segment at 1–29 is beta; it reads MPDPCCIDKCECKEGGCKAGCKCTSCRCT. Positions 5, 6, 10, 12, 17, 21, 23, 26, 28, 31, 34, 38, 40, 46, 50, 54, 56, and 57 each coordinate a divalent metal cation. An alpha region spans residues 30–58; sequence PCEKCSSGCKCTTKEDCCKTCTKPCSCCP.

Belongs to the metallothionein superfamily. Type 3 family.

Its function is as follows. Metallothioneins have a high content of cysteine residues that bind various heavy metals. Class I MTS in marine crustacea are involved in the sequestration of elevated levels of heavy-metal ions. The protein is Metallothionein of Carcinus maenas (Common shore crab).